The primary structure comprises 209 residues: Pyrrolidone-carboxylate peptidase (209 aa).

Active-site residues include Glu79, Cys142, and His164.

The protein belongs to the peptidase C15 family. In terms of assembly, homotetramer.

Its subcellular location is the cytoplasm. It carries out the reaction Release of an N-terminal pyroglutamyl group from a polypeptide, the second amino acid generally not being Pro.. Removes 5-oxoproline from various penultimate amino acid residues except L-proline. This chain is Pyrrolidone-carboxylate peptidase, found in Saccharolobus islandicus (strain L.S.2.15 / Lassen #1) (Sulfolobus islandicus).